The following is an 81-amino-acid chain: Sulfur carrier protein TusA (81 aa).

C19 (cysteine persulfide intermediate) is an active-site residue.

This sequence belongs to the sulfur carrier protein TusA family.

It is found in the cytoplasm. Functionally, sulfur carrier protein which probably makes part of a sulfur-relay system. The sequence is that of Sulfur carrier protein TusA from Shewanella baltica (strain OS185).